The sequence spans 48 residues: M-oxotoxin-Ot1a (48 aa).

Expressed by the venom gland.

The protein resides in the secreted. It localises to the target cell membrane. In terms of biological role, disrupts cell membranes, particularly those rich in phosphocholine, through formation of pores. Has antimicrobial activity against Gram-negative bacterium E.coli, Gram-positive bacteria B.subtilis and S.aureus, and hemolytic activity against sheep, pig and guinea pig erythrocytes. Has insecticidal activity against S.frugiperda ovarian cells by opening non-selective ion channels. Enhances the insecticidal activity of spider venom neurotoxic peptides. The polypeptide is M-oxotoxin-Ot1a (Oxyopes takobius (Lynx spider)).